The following is a 241-amino-acid chain: Transcription factor HEC1 (241 aa).

Positions 128 to 177 (ISKDPQSVAARHRRERISERIRILQRLVPGGTKMDTASMLDEAIHYVKFL) constitute a bHLH domain.

As to quaternary structure, homodimer. Interacts with SPT. Interacts with BZIP30. As to expression, flowers, especially in gynoecium.

Its subcellular location is the nucleus. Functionally, required for the female reproductive tract development and fertility. In Arabidopsis thaliana (Mouse-ear cress), this protein is Transcription factor HEC1 (HEC1).